Here is a 149-residue protein sequence, read N- to C-terminus: Gonadotropin subunit beta-2 (149 aa).

A signal peptide spans 1–24 (MARIPECTILLLLCMCVLAVPAQC). 6 cysteine pairs are disulfide-bonded: Cys30–Cys78, Cys44–Cys93, Cys47–Cys131, Cys55–Cys109, Cys59–Cys111, and Cys114–Cys121. Residue Asn34 is glycosylated (N-linked (GlcNAc...) asparagine).

It belongs to the glycoprotein hormones subunit beta family. In terms of assembly, heterodimer of an alpha and a beta chain.

Its subcellular location is the secreted. Involved in gametogenesis and steroidogenesis. The sequence is that of Gonadotropin subunit beta-2 (cgbb) from Clupea pallasii (Pacific herring).